The primary structure comprises 302 residues: Aspartate carbamoyltransferase catalytic subunit (302 aa).

Carbamoyl phosphate is bound by residues Arg51 and Thr52. Lys80 provides a ligand contact to L-aspartate. The carbamoyl phosphate site is built by Arg101, His129, and Gln132. Positions 162 and 223 each coordinate L-aspartate. Carbamoyl phosphate-binding residues include Leu261 and Pro262.

Belongs to the aspartate/ornithine carbamoyltransferase superfamily. ATCase family. Heterododecamer (2C3:3R2) of six catalytic PyrB chains organized as two trimers (C3), and six regulatory PyrI chains organized as three dimers (R2).

The enzyme catalyses carbamoyl phosphate + L-aspartate = N-carbamoyl-L-aspartate + phosphate + H(+). Its pathway is pyrimidine metabolism; UMP biosynthesis via de novo pathway; (S)-dihydroorotate from bicarbonate: step 2/3. Functionally, catalyzes the condensation of carbamoyl phosphate and aspartate to form carbamoyl aspartate and inorganic phosphate, the committed step in the de novo pyrimidine nucleotide biosynthesis pathway. This Chromobacterium violaceum (strain ATCC 12472 / DSM 30191 / JCM 1249 / CCUG 213 / NBRC 12614 / NCIMB 9131 / NCTC 9757 / MK) protein is Aspartate carbamoyltransferase catalytic subunit.